We begin with the raw amino-acid sequence, 244 residues long: Agamous-like MADS-box protein MADS2 (244 aa).

The 61-residue stretch at 1 to 61 (MGRGRVELKR…GKLYEFCSSS (61 aa)) folds into the MADS-box domain. The region spanning 88 to 178 (EQSSYREYLK…TRKLDEISVK (91 aa)) is the K-box domain.

As to expression, expressed in flowers and seeds.

Its subcellular location is the nucleus. In terms of biological role, probable transcription factor involved in flower development. This chain is Agamous-like MADS-box protein MADS2, found in Vitis vinifera (Grape).